The primary structure comprises 176 residues: MKIIAKKDLFINDEIRVREVRLVGLEGEQLGIKPLSEAQAIADDANVDLVLIQPQATPPVAKIMDYGKFKFEYQKKQKEQRKKQSVVTVKEVRLSPVIDKGDFETKLRNGRKFLEKGNKVKVSIRFKGRMITHKEIGAKVLAEFAEATQDIAIIEQRAKMDGRQMFMQLAPIPDKK.

This sequence belongs to the IF-3 family. Monomer.

It localises to the cytoplasm. In terms of biological role, IF-3 binds to the 30S ribosomal subunit and shifts the equilibrium between 70S ribosomes and their 50S and 30S subunits in favor of the free subunits, thus enhancing the availability of 30S subunits on which protein synthesis initiation begins. The chain is Translation initiation factor IF-3 from Streptococcus agalactiae serotype Ia (strain ATCC 27591 / A909 / CDC SS700).